The primary structure comprises 194 residues: Thymidylate kinase (194 aa).

Gly-7 to Ser-14 is an ATP binding site.

Belongs to the thymidylate kinase family.

It carries out the reaction dTMP + ATP = dTDP + ADP. Phosphorylation of dTMP to form dTDP in both de novo and salvage pathways of dTTP synthesis. This is Thymidylate kinase from Nautilia profundicola (strain ATCC BAA-1463 / DSM 18972 / AmH).